A 310-amino-acid chain; its full sequence is tRNA dimethylallyltransferase (310 aa).

14 to 21 is a binding site for ATP; the sequence is GPTASGKT. A substrate-binding site is contributed by 16–21; the sequence is TASGKT. Interaction with substrate tRNA regions lie at residues 39-42, 163-167, and 244-249; these read DSAL, QRLSR, and RCVGYR.

Belongs to the IPP transferase family. Monomer. Requires Mg(2+) as cofactor.

It carries out the reaction adenosine(37) in tRNA + dimethylallyl diphosphate = N(6)-dimethylallyladenosine(37) in tRNA + diphosphate. Catalyzes the transfer of a dimethylallyl group onto the adenine at position 37 in tRNAs that read codons beginning with uridine, leading to the formation of N6-(dimethylallyl)adenosine (i(6)A). In Aeromonas salmonicida (strain A449), this protein is tRNA dimethylallyltransferase.